A 260-amino-acid polypeptide reads, in one-letter code: Thiazole synthase (260 aa).

K96 functions as the Schiff-base intermediate with DXP in the catalytic mechanism. 1-deoxy-D-xylulose 5-phosphate contacts are provided by residues G157, 184–185 (AG), and 206–207 (NT).

It belongs to the ThiG family. Homotetramer. Forms heterodimers with either ThiH or ThiS.

Its subcellular location is the cytoplasm. The enzyme catalyses [ThiS sulfur-carrier protein]-C-terminal-Gly-aminoethanethioate + 2-iminoacetate + 1-deoxy-D-xylulose 5-phosphate = [ThiS sulfur-carrier protein]-C-terminal Gly-Gly + 2-[(2R,5Z)-2-carboxy-4-methylthiazol-5(2H)-ylidene]ethyl phosphate + 2 H2O + H(+). The protein operates within cofactor biosynthesis; thiamine diphosphate biosynthesis. Catalyzes the rearrangement of 1-deoxy-D-xylulose 5-phosphate (DXP) to produce the thiazole phosphate moiety of thiamine. Sulfur is provided by the thiocarboxylate moiety of the carrier protein ThiS. In vitro, sulfur can be provided by H(2)S. In Bradyrhizobium sp. (strain ORS 278), this protein is Thiazole synthase.